We begin with the raw amino-acid sequence, 157 residues long: Transcription elongation factor GreA (157 aa).

Residues 12 to 74 (LKKLEEELEY…TLEAMLKNAK (63 aa)) are a coiled coil.

This sequence belongs to the GreA/GreB family.

Its function is as follows. Necessary for efficient RNA polymerase transcription elongation past template-encoded arresting sites. The arresting sites in DNA have the property of trapping a certain fraction of elongating RNA polymerases that pass through, resulting in locked ternary complexes. Cleavage of the nascent transcript by cleavage factors such as GreA or GreB allows the resumption of elongation from the new 3'terminus. GreA releases sequences of 2 to 3 nucleotides. The polypeptide is Transcription elongation factor GreA (Caldanaerobacter subterraneus subsp. tengcongensis (strain DSM 15242 / JCM 11007 / NBRC 100824 / MB4) (Thermoanaerobacter tengcongensis)).